A 64-amino-acid polypeptide reads, in one-letter code: Epidermal growth factor (64 aa).

A signal peptide spans 1–21 (MMRHLLLVGAAILIFVSDAQA). A Pyrrolidone carboxylic acid modification is found at glutamine 22. Residues 25–61 (GEDPCQIVRCSYGANCIAYGDTAICECPFGYSGIRCQ) form the EGF-like domain. Intrachain disulfides connect cysteine 29–cysteine 40, cysteine 34–cysteine 49, and cysteine 51–cysteine 60.

Albumen gland. Up-regulated in adult CNS after axotomy.

It is found in the secreted. Its function is as follows. Induces neurite outgrowth in specific adult neurons in vitro. In Lymnaea stagnalis (Great pond snail), this protein is Epidermal growth factor.